A 239-amino-acid chain; its full sequence is Phosphoribosylaminoimidazole-succinocarboxamide synthase (239 aa).

Belongs to the SAICAR synthetase family.

It carries out the reaction 5-amino-1-(5-phospho-D-ribosyl)imidazole-4-carboxylate + L-aspartate + ATP = (2S)-2-[5-amino-1-(5-phospho-beta-D-ribosyl)imidazole-4-carboxamido]succinate + ADP + phosphate + 2 H(+). The protein operates within purine metabolism; IMP biosynthesis via de novo pathway; 5-amino-1-(5-phospho-D-ribosyl)imidazole-4-carboxamide from 5-amino-1-(5-phospho-D-ribosyl)imidazole-4-carboxylate: step 1/2. In Brevibacillus brevis (strain 47 / JCM 6285 / NBRC 100599), this protein is Phosphoribosylaminoimidazole-succinocarboxamide synthase.